A 548-amino-acid chain; its full sequence is Solute carrier family 22 member 7 (548 aa).

The chain crosses the membrane as a helical span at residues V21–L41. An N-linked (GlcNAc...) asparagine glycan is attached at N91. 11 helical membrane-spanning segments follow: residues A146–S166, V180–I200, L204–L224, V234–I254, W259–P279, I346–L366, Y376–V397, L404–V423, T432–F452, M466–L486, and L493–P513. F441 acts as the Important for glutamate counteranion efflux in catalysis. The disordered stretch occupies residues E522–N548.

It belongs to the major facilitator (TC 2.A.1) superfamily. Organic cation transporter (TC 2.A.1.19) family. In terms of tissue distribution, mainly expressed in liver and kidney. In kidney, expressed in proximal tubular cells. Also expressed in pancreas, small intestine, spinal cord, lung, brain and heart. Expressed in fetal liver.

Its subcellular location is the basolateral cell membrane. It is found in the apical cell membrane. It localises to the cell membrane. The protein localises to the cytoplasm. The protein resides in the cytosol. It carries out the reaction orotate(out) + L-glutamate(in) = orotate(in) + L-glutamate(out). The catalysed reaction is 3',5'-cyclic GMP(in) = 3',5'-cyclic GMP(out). It catalyses the reaction GMP(in) = GMP(out). The enzyme catalyses 2'-deoxyguanosine(in) = 2'-deoxyguanosine(out). It carries out the reaction GDP(in) = GDP(out). The catalysed reaction is guanosine(in) = guanosine(out). It catalyses the reaction GTP(in) = GTP(out). The enzyme catalyses 3',5'-cyclic AMP(in) = 3',5'-cyclic AMP(out). It carries out the reaction creatinine(in) = creatinine(out). The catalysed reaction is prostaglandin E2(out) = prostaglandin E2(in). It catalyses the reaction 2-oxoglutarate(in) = 2-oxoglutarate(out). The enzyme catalyses glutarate(in) = glutarate(out). It carries out the reaction urate(out) = urate(in). The catalysed reaction is estrone 3-sulfate(out) = estrone 3-sulfate(in). It catalyses the reaction prostaglandin F2alpha(out) = prostaglandin F2alpha(in). Functionally, functions as a Na(+)-independent bidirectional multispecific transporter. Contributes to the renal and hepatic elimination of endogenous organic compounds from the systemic circulation into the urine and bile, respectively. Capable of transporting a wide range of purine and pyrimidine nucleobases, nucleosides and nucleotides, with cGMP, 2'deoxyguanosine and GMP being the preferred substrates. Functions as a pH- and chloride-independent cGMP bidirectional facilitative transporter that can regulate both intracellular and extracellular levels of cGMP and may be involved in cGMP signaling pathways. Mediates orotate/glutamate bidirectional exchange and most likely display a physiological role in hepatic release of glutamate into the blood. Involved in renal secretion and possible reabsorption of creatinine. Able to uptake prostaglandin E2 (PGE2) and may contribute to PGE2 renal excretion. Also transports alpha-ketoglutarate and urate. Apart from the orotate/glutamate exchange, the counterions for the uptake of other SLC22A7/OAT2 substrates remain to be identified. Non functional transporter. Its function is as follows. Involved in the uptake of prostaglandin F2-alpha (PGF2-alpha). The polypeptide is Solute carrier family 22 member 7 (Homo sapiens (Human)).